The following is a 232-amino-acid chain: Orotidine 5'-phosphate decarboxylase (232 aa).

Residues aspartate 13, lysine 35, aspartate 62–threonine 71, threonine 122, arginine 182, glutamine 191, glycine 211, and arginine 212 contribute to the substrate site. Residue lysine 64 is the Proton donor of the active site.

The protein belongs to the OMP decarboxylase family. Type 1 subfamily. As to quaternary structure, homodimer.

The enzyme catalyses orotidine 5'-phosphate + H(+) = UMP + CO2. Its pathway is pyrimidine metabolism; UMP biosynthesis via de novo pathway; UMP from orotate: step 2/2. Catalyzes the decarboxylation of orotidine 5'-monophosphate (OMP) to uridine 5'-monophosphate (UMP). This is Orotidine 5'-phosphate decarboxylase from Pseudomonas syringae pv. tomato (strain ATCC BAA-871 / DC3000).